The chain runs to 214 residues: Cytochrome b (214 aa).

4 helical membrane passes run 31–51, 75–96, 111–131, and 176–196; these read FGSM…FLAF, WIMQ…YIHI, WVSG…GYVL, and FFAL…IHIL. Heme b-binding residues include histidine 81 and histidine 95. Residues histidine 180 and histidine 194 each coordinate heme b. Residue histidine 199 participates in a ubiquinone binding.

This sequence belongs to the cytochrome b family. In terms of assembly, the cytochrome bc1 complex contains 3 respiratory subunits (MT-CYB, CYC1 and UQCRFS1), 2 core proteins (UQCRC1 and UQCRC2) and probably 6 low-molecular weight proteins. Requires heme b as cofactor.

The protein resides in the mitochondrion inner membrane. Its function is as follows. Component of the ubiquinol-cytochrome c reductase complex (complex III or cytochrome b-c1 complex) that is part of the mitochondrial respiratory chain. The b-c1 complex mediates electron transfer from ubiquinol to cytochrome c. Contributes to the generation of a proton gradient across the mitochondrial membrane that is then used for ATP synthesis. In Gloydius blomhoffii (Mamushi), this protein is Cytochrome b (MT-CYB).